A 428-amino-acid polypeptide reads, in one-letter code: Probable oxidoreductase OrdL (428 aa).

This chain is Probable oxidoreductase OrdL (ordL), found in Rhizobium meliloti (strain 1021) (Ensifer meliloti).